A 98-amino-acid polypeptide reads, in one-letter code: MSVLTFLKPRGSSSVARERLQLILAHERAERSETGRPDLIITLREEILNVIAKHVTVERDKVQIKLERGEGVSTLGVDIEFPVDAISKAKPKAKRAIA.

This sequence belongs to the MinE family.

Functionally, prevents the cell division inhibition by proteins MinC and MinD at internal division sites while permitting inhibition at polar sites. This ensures cell division at the proper site by restricting the formation of a division septum at the midpoint of the long axis of the cell. This is Cell division topological specificity factor from Methylorubrum populi (strain ATCC BAA-705 / NCIMB 13946 / BJ001) (Methylobacterium populi).